The following is a 93-amino-acid chain: uncharacterized protein (93 aa).

This sequence belongs to the SIMIBI class G3E GTPase family. ArgK/MeaB subfamily.

This is an uncharacterized protein from Streptomyces virginiae (Streptomyces cinnamonensis).